Here is a 397-residue protein sequence, read N- to C-terminus: 1-deoxy-D-xylulose 5-phosphate reductoisomerase (397 aa).

Positions 10, 11, 12, 13, 36, 38, and 128 each coordinate NADPH. Position 129 (Lys-129) interacts with 1-deoxy-D-xylulose 5-phosphate. Residue Glu-130 participates in NADPH binding. Asp-154 lines the Mn(2+) pocket. 1-deoxy-D-xylulose 5-phosphate-binding residues include Ser-155, Glu-156, Ser-180, and His-203. Glu-156 is a binding site for Mn(2+). Position 209 (Gly-209) interacts with NADPH. Positions 221, 222, and 225 each coordinate 1-deoxy-D-xylulose 5-phosphate. Glu-225 contributes to the Mn(2+) binding site.

Belongs to the DXR family. Mg(2+) is required as a cofactor. Requires Mn(2+) as cofactor.

The enzyme catalyses 2-C-methyl-D-erythritol 4-phosphate + NADP(+) = 1-deoxy-D-xylulose 5-phosphate + NADPH + H(+). The protein operates within isoprenoid biosynthesis; isopentenyl diphosphate biosynthesis via DXP pathway; isopentenyl diphosphate from 1-deoxy-D-xylulose 5-phosphate: step 1/6. Functionally, catalyzes the NADPH-dependent rearrangement and reduction of 1-deoxy-D-xylulose-5-phosphate (DXP) to 2-C-methyl-D-erythritol 4-phosphate (MEP). This Solibacter usitatus (strain Ellin6076) protein is 1-deoxy-D-xylulose 5-phosphate reductoisomerase.